Here is a 169-residue protein sequence, read N- to C-terminus: Unfolded protein response-inducible protein 1 (169 aa).

Functionally, involved in the unfolded protein response (UPR), a transcriptional response which up-regulates genes that enable cells to cope with misfolded, endoplasmic reticulum-retained proteins. UPR is part of the endoplasmic reticulum quality control (ERQC) which prevents the exit of misfolded secretory and membrane proteins from the endoplasmic reticulum. The polypeptide is Unfolded protein response-inducible protein 1 (ULI1) (Saccharomyces cerevisiae (strain ATCC 204508 / S288c) (Baker's yeast)).